The following is a 1133-amino-acid chain: uncharacterized protein (1133 aa).

Disordered regions lie at residues 33–83, 305–629, 679–723, and 736–817; these read QFED…NSSS, PVSN…NSNS, GKLD…SVKR, and IESP…SEEV. A compositionally biased stretch (low complexity) spans 39–83; the sequence is NNNNSNNNNNNNNSNNNNSNNNENINRKTGSTLLSSSTSQLNSSS. Positions 40–308 form a DNA-binding region, NDT80; sequence NNNSNNNNNN…GHPTCNPVSN (269 aa). The span at 305–316 shows a compositional bias: polar residues; it reads PVSNNPSTPGTP. Low complexity predominate over residues 317–384; it reads ISNFDSSNNN…NNNSSGNSSS (68 aa). The segment covering 401–417 has biased composition (polar residues); it reads INSLSNHNSPHLTPIQY. Residues 418-452 show a composition bias toward low complexity; the sequence is NNNNNNSNNNSNNNNNNNNNNNNSNNNNNNSNNNN. Positions 453 to 470 are enriched in polar residues; it reads HQFQSNNRIFKGNLSNPF. Low complexity-rich tracts occupy residues 473–615 and 686–714; these read NYSQ…GNNS and NNSN…NNNN. Over residues 736–747 the composition is skewed to polar residues; that stretch reads IESPQSYISSPT. Positions 757 to 771 are enriched in pro residues; sequence QPQPQPQPQPQPQPQ. The segment covering 772–808 has biased composition (low complexity); it reads PQSQSQSQSQSQSQSQSQSQSQSQPIQQIVQQQLSSP. The region spanning 909-1020 is the Peptidase S74 domain; the sequence is SDKRVKENVK…KKVDNVCMEL (112 aa). Residues 1055–1075 traverse the membrane as a helical segment; sequence IFIGIGVFTLFVIFGLVAVSI. The disordered stretch occupies residues 1107 to 1133; the sequence is SGSNSCYDSSSNSAIDTTTSTGSGSIK.

The protein localises to the membrane. This is an uncharacterized protein from Dictyostelium discoideum (Social amoeba).